The sequence spans 449 residues: MKSSVEKLSDTRSKITVEVPFSELKPEIDQAYAALAQQVQIPGFRKGKAPRQLIDARFGRGAVLEQVVNDMLPNRYAQAIEAEGIKAIGQPNVEVTKIEDNELVEFVAEVDVRPEFELPKFEDITVEVPAIKADEEAIEAELETLRARFSTLKDHNHKLKKGEFVTINITASIDGEKIEEATTEGLSYEIGSDDLIDGLDKALIGAKKDETVEFTSELANGEHKGKEAQISVEITATKQRELPELDDEFAQLASEFDTIEELRESTVSDVEAKQKNEQAAAIRDEVLAAALGEADFALPQSIVDEQAHSQLHQLLGELAHDDAALNSLLEAQGTTREEFDKKNVEDAEKAVRTQLFLDTLSEVEEPEVSQQELTDHILFTAQSYGMDPNQFIGQLQQSGQIANLFSDVRRGKALAQAICRVNVKDSEGNEIDPKEYFGEEEVAETESEA.

Residues 162–243 (GEFVTINITA…ITATKQRELP (82 aa)) enclose the PPIase FKBP-type domain. Over residues 428–437 (GNEIDPKEYF) the composition is skewed to basic and acidic residues. Residues 428-449 (GNEIDPKEYFGEEEVAETESEA) form a disordered region. The segment covering 438–449 (GEEEVAETESEA) has biased composition (acidic residues).

It belongs to the FKBP-type PPIase family. Tig subfamily.

The protein resides in the cytoplasm. The catalysed reaction is [protein]-peptidylproline (omega=180) = [protein]-peptidylproline (omega=0). Involved in protein export. Acts as a chaperone by maintaining the newly synthesized protein in an open conformation. Functions as a peptidyl-prolyl cis-trans isomerase. The protein is Trigger factor of Corynebacterium glutamicum (strain R).